The following is a 361-amino-acid chain: Phospho-N-acetylmuramoyl-pentapeptide-transferase (361 aa).

10 helical membrane passes run 25 to 45, 72 to 92, 95 to 115, 135 to 155, 169 to 189, 200 to 220, 240 to 260, 264 to 284, 289 to 309, and 338 to 358; these read TGGA…WIID, TPTM…VLWA, LNPY…VGFY, LLIE…LGRA, VMLN…VGAG, GLAI…SYLA, LAVL…FNAP, IFMG…IAVA, IVLA…IVQV, and QIVI…LSTL.

The protein belongs to the glycosyltransferase 4 family. MraY subfamily. Requires Mg(2+) as cofactor.

It localises to the cell inner membrane. It carries out the reaction UDP-N-acetyl-alpha-D-muramoyl-L-alanyl-gamma-D-glutamyl-meso-2,6-diaminopimeloyl-D-alanyl-D-alanine + di-trans,octa-cis-undecaprenyl phosphate = di-trans,octa-cis-undecaprenyl diphospho-N-acetyl-alpha-D-muramoyl-L-alanyl-D-glutamyl-meso-2,6-diaminopimeloyl-D-alanyl-D-alanine + UMP. Its pathway is cell wall biogenesis; peptidoglycan biosynthesis. In terms of biological role, catalyzes the initial step of the lipid cycle reactions in the biosynthesis of the cell wall peptidoglycan: transfers peptidoglycan precursor phospho-MurNAc-pentapeptide from UDP-MurNAc-pentapeptide onto the lipid carrier undecaprenyl phosphate, yielding undecaprenyl-pyrophosphoryl-MurNAc-pentapeptide, known as lipid I. The sequence is that of Phospho-N-acetylmuramoyl-pentapeptide-transferase from Rhodopseudomonas palustris (strain TIE-1).